Reading from the N-terminus, the 282-residue chain is S-formylglutathione hydrolase (282 aa).

Residue Ala-2 is modified to N-acetylalanine. Position 4 is an N6-succinyllysine (Lys-4). The Charge relay system role is filled by Ser-149. Lys-200 carries the N6-acetyllysine modification. Active-site charge relay system residues include Asp-226 and His-260.

The protein belongs to the esterase D family. In terms of assembly, homodimer.

Its subcellular location is the cytoplasm. The protein localises to the cytoplasmic vesicle. The enzyme catalyses S-formylglutathione + H2O = formate + glutathione + H(+). In terms of biological role, serine hydrolase involved in the detoxification of formaldehyde. The protein is S-formylglutathione hydrolase (Esd) of Mus musculus (Mouse).